Here is a 372-residue protein sequence, read N- to C-terminus: Alanine dehydrogenase 2 (372 aa).

His95 is an active-site residue. An NAD(+)-binding site is contributed by 169-199 (KVTIIGGGQAGTNAAKIALGLGADVTILDVN).

The protein belongs to the AlaDH/PNT family.

The enzyme catalyses L-alanine + NAD(+) + H2O = pyruvate + NH4(+) + NADH + H(+). The protein operates within amino-acid degradation; L-alanine degradation via dehydrogenase pathway; NH(3) and pyruvate from L-alanine: step 1/1. Its function is as follows. May play a role in cell wall synthesis as L-alanine is an important constituent of the peptidoglycan layer. This is Alanine dehydrogenase 2 (ald2) from Staphylococcus aureus (strain Mu50 / ATCC 700699).